Consider the following 391-residue polypeptide: 3-ketoacyl-CoA thiolase (391 aa).

C95 serves as the catalytic Acyl-thioester intermediate. Catalysis depends on proton acceptor residues H347 and C377.

Belongs to the thiolase-like superfamily. Thiolase family. In terms of assembly, heterotetramer of two alpha chains (FadB) and two beta chains (FadA).

It is found in the cytoplasm. It carries out the reaction an acyl-CoA + acetyl-CoA = a 3-oxoacyl-CoA + CoA. The protein operates within lipid metabolism; fatty acid beta-oxidation. Its function is as follows. Catalyzes the final step of fatty acid oxidation in which acetyl-CoA is released and the CoA ester of a fatty acid two carbons shorter is formed. The protein is 3-ketoacyl-CoA thiolase of Pseudomonas putida (Arthrobacter siderocapsulatus).